The sequence spans 124 residues: Putative ankyrin repeat protein RF_1087 (124 aa).

ANK repeat units lie at residues 17-46, 50-79, and 83-112; these read NDQKLLHLAIRAGYKNIVEYLLKKGANPNI, NGETTLHFAAMNGCVRTIECLIKSGAIIDS, and FERTPLELAINSGNTDAVKLFLQYEATIGN.

The chain is Putative ankyrin repeat protein RF_1087 from Rickettsia felis (strain ATCC VR-1525 / URRWXCal2) (Rickettsia azadi).